The primary structure comprises 427 residues: Anaerobic glycerol-3-phosphate dehydrogenase subunit B (427 aa).

It belongs to the anaerobic G-3-P dehydrogenase subunit B family. Composed of a catalytic GlpA/B dimer and of membrane bound GlpC. FMN is required as a cofactor.

It catalyses the reaction a quinone + sn-glycerol 3-phosphate = dihydroxyacetone phosphate + a quinol. The protein operates within polyol metabolism; glycerol degradation via glycerol kinase pathway; glycerone phosphate from sn-glycerol 3-phosphate (anaerobic route): step 1/1. In terms of biological role, conversion of glycerol 3-phosphate to dihydroxyacetone. Uses fumarate or nitrate as electron acceptor. In Glaesserella parasuis serovar 5 (strain SH0165) (Haemophilus parasuis), this protein is Anaerobic glycerol-3-phosphate dehydrogenase subunit B.